A 294-amino-acid polypeptide reads, in one-letter code: N-acetylmuramic acid 6-phosphate etherase (294 aa).

Positions 54-217 (VIKSFEEEGR…STASMIGVGK (164 aa)) constitute an SIS domain. The active-site Proton donor is the Glu82. Residue Glu113 is part of the active site.

It belongs to the GCKR-like family. MurNAc-6-P etherase subfamily. In terms of assembly, homodimer.

It catalyses the reaction N-acetyl-D-muramate 6-phosphate + H2O = N-acetyl-D-glucosamine 6-phosphate + (R)-lactate. The protein operates within amino-sugar metabolism; N-acetylmuramate degradation. In terms of biological role, specifically catalyzes the cleavage of the D-lactyl ether substituent of MurNAc 6-phosphate, producing GlcNAc 6-phosphate and D-lactate. This is N-acetylmuramic acid 6-phosphate etherase from Bacillus cereus (strain ATCC 10987 / NRS 248).